The sequence spans 222 residues: N-(5'-phosphoribosyl)anthranilate isomerase (222 aa).

This sequence belongs to the TrpF family.

The enzyme catalyses N-(5-phospho-beta-D-ribosyl)anthranilate = 1-(2-carboxyphenylamino)-1-deoxy-D-ribulose 5-phosphate. It participates in amino-acid biosynthesis; L-tryptophan biosynthesis; L-tryptophan from chorismate: step 3/5. The sequence is that of N-(5'-phosphoribosyl)anthranilate isomerase from Gloeobacter violaceus (strain ATCC 29082 / PCC 7421).